The following is a 453-amino-acid chain: 3-phosphoshikimate 1-carboxyvinyltransferase (453 aa).

Residues Lys-28, Ser-29, and Arg-33 each coordinate 3-phosphoshikimate. Position 28 (Lys-28) interacts with phosphoenolpyruvate. 2 residues coordinate phosphoenolpyruvate: Gly-101 and Arg-129. Residues Ser-174, Gln-176, Asp-326, and Lys-353 each contribute to the 3-phosphoshikimate site. Residue Gln-176 coordinates phosphoenolpyruvate. Asp-326 serves as the catalytic Proton acceptor. Phosphoenolpyruvate is bound by residues Arg-357 and Arg-405.

Belongs to the EPSP synthase family. Monomer.

The protein resides in the cytoplasm. It catalyses the reaction 3-phosphoshikimate + phosphoenolpyruvate = 5-O-(1-carboxyvinyl)-3-phosphoshikimate + phosphate. The protein operates within metabolic intermediate biosynthesis; chorismate biosynthesis; chorismate from D-erythrose 4-phosphate and phosphoenolpyruvate: step 6/7. Functionally, catalyzes the transfer of the enolpyruvyl moiety of phosphoenolpyruvate (PEP) to the 5-hydroxyl of shikimate-3-phosphate (S3P) to produce enolpyruvyl shikimate-3-phosphate and inorganic phosphate. The protein is 3-phosphoshikimate 1-carboxyvinyltransferase of Zymomonas mobilis subsp. mobilis (strain ATCC 31821 / ZM4 / CP4).